The sequence spans 274 residues: Halorhodopsin (274 aa).

A propeptide spanning residues 1-21 is cleaved from the precursor; the sequence is MSITSVPGVVDAGVLGAQSAA. Residues 22-25 are Extracellular-facing; that stretch reads AVRE. Residues 26-51 form a helical membrane-spanning segment; sequence NALLSSSLWVNVALAGIAILVFVYMG. The Cytoplasmic portion of the chain corresponds to 52-57; it reads RTIRPG. A helical membrane pass occupies residues 58–81; sequence RPRLIWGATLMIPLVSISSYLGLL. The Extracellular segment spans residues 82–105; sequence SGLTVGMIEMPAGHALAGEMVRSQ. Residues Q105, T111, and S115 each coordinate chloride. A helical membrane pass occupies residues 106 to 127; sequence WGRYLTWALSTPMILLALGLLA. The Cytoplasmic segment spans residues 128-130; that stretch reads DVD. A helical transmembrane segment spans residues 131-154; it reads LGSLFTVIAADIGMCVTGLAAAMT. Residues 155 to 157 are Extracellular-facing; that stretch reads TSA. The helical transmembrane segment at 158–180 threads the bilayer; sequence LLFRWAFYAISCAFFVVVLSALV. The Cytoplasmic portion of the chain corresponds to 181–192; that stretch reads TDWAASASSAGT. The helical transmembrane segment at 193 to 216 threads the bilayer; the sequence is AEIFDTLRVLTVVLWLGYPIVWAV. Over 217–226 the chain is Extracellular; the sequence is GVEGLALVQS. Residues 227-255 traverse the membrane as a helical segment; that stretch reads VGVTSWAYSVLDVFAKYVFAFILLRWVAN. Position 242 is an N6-(retinylidene)lysine (K242). The Cytoplasmic segment spans residues 256-274; it reads NERTVAVAGQTLGTMSSDD.

Belongs to the archaeal/bacterial/fungal opsin family. As to quaternary structure, homotrimer.

The protein resides in the cell membrane. Light-driven chloride pump. This is Halorhodopsin (hop) from Halobacterium salinarum (strain ATCC 29341 / DSM 671 / R1).